The primary structure comprises 406 residues: 3-oxoacyl-[acyl-carrier-protein] synthase 1 (406 aa).

Residues 1–403 (MKRAVITGLG…GTNATLVMRK (403 aa)) form the Ketosynthase family 3 (KS3) domain. Residues Cys163, His298, and His333 each act as for beta-ketoacyl synthase activity in the active site.

It belongs to the thiolase-like superfamily. Beta-ketoacyl-ACP synthases family. Homodimer.

It localises to the cytoplasm. The enzyme catalyses a fatty acyl-[ACP] + malonyl-[ACP] + H(+) = a 3-oxoacyl-[ACP] + holo-[ACP] + CO2. It carries out the reaction (3Z)-decenoyl-[ACP] + malonyl-[ACP] + H(+) = 3-oxo-(5Z)-dodecenoyl-[ACP] + holo-[ACP] + CO2. The protein operates within lipid metabolism; fatty acid biosynthesis. Its function is as follows. Involved in the type II fatty acid elongation cycle. Catalyzes the elongation of a wide range of acyl-ACP by the addition of two carbons from malonyl-ACP to an acyl acceptor. Can also use unsaturated fatty acids. Catalyzes a key reaction in unsaturated fatty acid (UFA) synthesis, the elongation of the cis-3-decenoyl-ACP produced by FabA. The polypeptide is 3-oxoacyl-[acyl-carrier-protein] synthase 1 (fabB) (Escherichia coli O6:H1 (strain CFT073 / ATCC 700928 / UPEC)).